A 460-amino-acid chain; its full sequence is 25S rRNA (cytosine-C(5))-methyltransferase rcm1 (460 aa).

S-adenosyl-L-methionine contacts are provided by residues 223 to 229 (CAAPGNK), Glu246, Asp273, and Asp293. The active-site Nucleophile is the Cys350. The span at 430 to 439 (KMYKNDDDTK) shows a compositional bias: basic and acidic residues. The interval 430–460 (KMYKNDDDTKKRKRKKKKKEVKKKARIQGEE) is disordered. A compositionally biased stretch (basic residues) spans 440–460 (KRKRKKKKKEVKKKARIQGEE).

This sequence belongs to the class I-like SAM-binding methyltransferase superfamily. RsmB/NOP family. In terms of assembly, interacts with trm112.

It is found in the nucleus. The protein resides in the nucleolus. It catalyses the reaction a cytidine in 25S rRNA + S-adenosyl-L-methionine = a 5-methylcytidine in 25S rRNA + S-adenosyl-L-homocysteine + H(+). Functionally, S-adenosyl-L-methionine-dependent methyltransferase that specifically methylates the C(5) position of a cytosine in 25S rRNA. The chain is 25S rRNA (cytosine-C(5))-methyltransferase rcm1 (rcm1) from Schizosaccharomyces pombe (strain 972 / ATCC 24843) (Fission yeast).